Here is a 349-residue protein sequence, read N- to C-terminus: Isopentenyl-diphosphate delta-isomerase (349 aa).

6–7 (RK) is a substrate binding site. FMN contacts are provided by residues 62 to 64 (AMT), Ser-93, and Asn-122. Gln-152 contacts substrate. Glu-153 lines the Mg(2+) pocket. Residues Lys-184, Thr-214, 258–259 (GG), and 280–281 (AG) contribute to the FMN site.

Belongs to the IPP isomerase type 2 family. In terms of assembly, homooctamer. Dimer of tetramers. FMN is required as a cofactor. It depends on NADPH as a cofactor. Requires Mg(2+) as cofactor.

The protein resides in the cytoplasm. It catalyses the reaction isopentenyl diphosphate = dimethylallyl diphosphate. Involved in the biosynthesis of isoprenoids. Catalyzes the 1,3-allylic rearrangement of the homoallylic substrate isopentenyl (IPP) to its allylic isomer, dimethylallyl diphosphate (DMAPP). The protein is Isopentenyl-diphosphate delta-isomerase of Bacillus thuringiensis subsp. konkukian (strain 97-27).